A 137-amino-acid chain; its full sequence is Large ribosomal subunit protein uL16 (137 aa).

This sequence belongs to the universal ribosomal protein uL16 family. Part of the 50S ribosomal subunit.

Binds 23S rRNA and is also seen to make contacts with the A and possibly P site tRNAs. The sequence is that of Large ribosomal subunit protein uL16 from Chelativorans sp. (strain BNC1).